A 351-amino-acid polypeptide reads, in one-letter code: Glycerol-3-phosphate dehydrogenase [NAD(P)+] (351 aa).

The NADPH site is built by Ser-18, Trp-19, Arg-38, and Lys-122. Sn-glycerol 3-phosphate is bound by residues Lys-122, Gly-153, and Ser-155. Ala-157 contributes to the NADPH binding site. Sn-glycerol 3-phosphate-binding residues include Lys-208, Asp-261, Ser-271, Arg-272, and Asn-273. The active-site Proton acceptor is Lys-208. Residue Arg-272 participates in NADPH binding. Glu-297 lines the NADPH pocket.

It belongs to the NAD-dependent glycerol-3-phosphate dehydrogenase family.

It is found in the cytoplasm. The enzyme catalyses sn-glycerol 3-phosphate + NAD(+) = dihydroxyacetone phosphate + NADH + H(+). It carries out the reaction sn-glycerol 3-phosphate + NADP(+) = dihydroxyacetone phosphate + NADPH + H(+). It functions in the pathway membrane lipid metabolism; glycerophospholipid metabolism. In terms of biological role, catalyzes the reduction of the glycolytic intermediate dihydroxyacetone phosphate (DHAP) to sn-glycerol 3-phosphate (G3P), the key precursor for phospholipid synthesis. The chain is Glycerol-3-phosphate dehydrogenase [NAD(P)+] from Bordetella parapertussis (strain 12822 / ATCC BAA-587 / NCTC 13253).